Reading from the N-terminus, the 287-residue chain is ATP synthase gamma chain (287 aa).

It belongs to the ATPase gamma chain family. In terms of assembly, F-type ATPases have 2 components, CF(1) - the catalytic core - and CF(0) - the membrane proton channel. CF(1) has five subunits: alpha(3), beta(3), gamma(1), delta(1), epsilon(1). CF(0) has three main subunits: a, b and c.

The protein localises to the cell inner membrane. Its function is as follows. Produces ATP from ADP in the presence of a proton gradient across the membrane. The gamma chain is believed to be important in regulating ATPase activity and the flow of protons through the CF(0) complex. This is ATP synthase gamma chain from Geotalea uraniireducens (strain Rf4) (Geobacter uraniireducens).